Here is a 148-residue protein sequence, read N- to C-terminus: Hydrogenase expression/formation protein HoxO (148 aa).

The disordered stretch occupies residues 128 to 148; that stretch reads IPVLSPESGTPSCSPMETSES. Over residues 134 to 148 the composition is skewed to polar residues; it reads ESGTPSCSPMETSES.

It belongs to the HupG/HyaE family.

This is Hydrogenase expression/formation protein HoxO (hoxO) from Azotobacter vinelandii.